The following is a 252-amino-acid chain: 5'-methylthioadenosine/S-adenosylhomocysteine nucleosidase (252 aa).

Glu20 serves as the catalytic Proton acceptor. Substrate contacts are provided by residues Gly86, Ile160, and 181–182 (ME). Asp205 (proton donor) is an active-site residue.

This sequence belongs to the PNP/UDP phosphorylase family. MtnN subfamily. Homodimer.

It carries out the reaction S-adenosyl-L-homocysteine + H2O = S-(5-deoxy-D-ribos-5-yl)-L-homocysteine + adenine. The catalysed reaction is S-methyl-5'-thioadenosine + H2O = 5-(methylsulfanyl)-D-ribose + adenine. It catalyses the reaction 5'-deoxyadenosine + H2O = 5-deoxy-D-ribose + adenine. It participates in amino-acid biosynthesis; L-methionine biosynthesis via salvage pathway; S-methyl-5-thio-alpha-D-ribose 1-phosphate from S-methyl-5'-thioadenosine (hydrolase route): step 1/2. Catalyzes the irreversible cleavage of the glycosidic bond in both 5'-methylthioadenosine (MTA) and S-adenosylhomocysteine (SAH/AdoHcy) to adenine and the corresponding thioribose, 5'-methylthioribose and S-ribosylhomocysteine, respectively. Also cleaves 5'-deoxyadenosine, a toxic by-product of radical S-adenosylmethionine (SAM) enzymes, into 5-deoxyribose and adenine. Thus, is required for in vivo function of the radical SAM enzymes biotin synthase and lipoic acid synthase, that are inhibited by 5'-deoxyadenosine accumulation. This chain is 5'-methylthioadenosine/S-adenosylhomocysteine nucleosidase, found in Buchnera aphidicola subsp. Baizongia pistaciae (strain Bp).